The primary structure comprises 311 residues: Bifunctional protein FolD (311 aa).

174 to 176 serves as a coordination point for NADP(+); that stretch reads GKG.

The protein belongs to the tetrahydrofolate dehydrogenase/cyclohydrolase family. Homodimer.

It carries out the reaction (6R)-5,10-methylene-5,6,7,8-tetrahydrofolate + NADP(+) = (6R)-5,10-methenyltetrahydrofolate + NADPH. It catalyses the reaction (6R)-5,10-methenyltetrahydrofolate + H2O = (6R)-10-formyltetrahydrofolate + H(+). It functions in the pathway one-carbon metabolism; tetrahydrofolate interconversion. Functionally, catalyzes the oxidation of 5,10-methylenetetrahydrofolate to 5,10-methenyltetrahydrofolate and then the hydrolysis of 5,10-methenyltetrahydrofolate to 10-formyltetrahydrofolate. This Pyrobaculum islandicum (strain DSM 4184 / JCM 9189 / GEO3) protein is Bifunctional protein FolD.